The following is a 46-amino-acid chain: Bacteriocin acidocin 8912 (46 aa).

Positions 1 to 20 (MISSHQKTLTDKELALISGG) are excised as a propeptide.

The protein resides in the secreted. Functionally, has a bactericidal effect on sensitive cells but not a bacteriolytic effect. This chain is Bacteriocin acidocin 8912 (acdT), found in Lactobacillus acidophilus.